The following is a 281-amino-acid chain: Nicotinamide/nicotinic acid mononucleotide adenylyltransferase 1 (281 aa).

Residues glycine 15 and serine 16 each contribute to the beta-nicotinamide D-ribonucleotide site. Glycine 15, serine 16, phenylalanine 17, and methionine 23 together coordinate NAD(+). 15–17 lines the ATP pocket; sequence GSF. Residue histidine 24 coordinates ATP. Beta-nicotinamide D-ribonucleotide contacts are provided by tyrosine 55 and lysine 57. Lysine 57 lines the NAD(+) pocket. Lysine 58 provides a ligand contact to ATP. Beta-nicotinamide D-ribonucleotide-binding residues include tryptophan 92 and threonine 95. NAD(+) is bound by residues tryptophan 92 and threonine 95. Positions 113–143 are disordered; the sequence is PQQNSPVLEKPGRKRKWAEQKQDISEKKSLE. Serine 117 carries the post-translational modification Phosphoserine. The Nuclear localization signal signature appears at 123 to 129; that stretch reads PGRKRKW. The segment covering 129-143 has biased composition (basic and acidic residues); that stretch reads WAEQKQDISEKKSLE. 6 residues coordinate NAD(+): glycine 158, aspartate 160, leucine 170, tryptophan 171, glutamate 217, and asparagine 221. An ATP-binding site is contributed by 158-160; the sequence is GAD. The beta-nicotinamide D-ribonucleotide site is built by leucine 170 and tryptophan 171. 226 to 229 contributes to the ATP binding site; it reads TKIR.

This sequence belongs to the eukaryotic NMN adenylyltransferase family. As to quaternary structure, homohexamer. Interacts with ADPRT/PARP1. The cofactor is Zn(2+). Requires Mg(2+) as cofactor.

It is found in the nucleus. It catalyses the reaction beta-nicotinamide D-ribonucleotide + ATP + H(+) = diphosphate + NAD(+). The enzyme catalyses nicotinate beta-D-ribonucleotide + ATP + H(+) = deamido-NAD(+) + diphosphate. It participates in cofactor biosynthesis; NAD(+) biosynthesis; NAD(+) from nicotinamide D-ribonucleotide: step 1/1. The protein operates within cofactor biosynthesis; NAD(+) biosynthesis; deamido-NAD(+) from nicotinate D-ribonucleotide: step 1/1. With respect to regulation, activity is strongly inhibited by galotannin. Inhibited by P1-(adenosine-5')-P4-(nicotinic-acid-riboside-5')-tetraphosphate (Nap4AD). Its function is as follows. Catalyzes the formation of NAD(+) from nicotinamide mononucleotide (NMN) and ATP. Can also use the deamidated form; nicotinic acid mononucleotide (NaMN) as substrate with the same efficiency. Can use triazofurin monophosphate (TrMP) as substrate. Also catalyzes the reverse reaction, i.e. the pyrophosphorolytic cleavage of NAD(+). For the pyrophosphorolytic activity, prefers NAD(+) and NaAD as substrates and degrades NADH, nicotinic acid adenine dinucleotide phosphate (NHD) and nicotinamide guanine dinucleotide (NGD) less effectively. Involved in the synthesis of ATP in the nucleus, together with PARP1, PARG and NUDT5. Nuclear ATP generation is required for extensive chromatin remodeling events that are energy-consuming. Fails to cleave phosphorylated dinucleotides NADP(+), NADPH and NaADP(+). Also acts as a cofactor for glutamate and aspartate ADP-ribosylation by directing PARP1 catalytic activity to glutamate and aspartate residues on histones. Protects against axonal degeneration following mechanical or toxic insults. Delays axonal degeneration after axotomy. Results in a &gt;10-fold increase in intact neurites 72 hours after injury. Neural protection does not correlate with cellular NAD(+) levels but may still require enzyme activity. The chain is Nicotinamide/nicotinic acid mononucleotide adenylyltransferase 1 (NMNAT1) from Bos taurus (Bovine).